The primary structure comprises 173 residues: Putative 4-hydroxy-4-methyl-2-oxoglutarate aldolase (173 aa).

Substrate is bound by residues 89-92 (GGNL) and Arg111. Asp112 lines the a divalent metal cation pocket.

Belongs to the class II aldolase/RraA-like family. In terms of assembly, homotrimer. A divalent metal cation serves as cofactor.

The enzyme catalyses 4-hydroxy-4-methyl-2-oxoglutarate = 2 pyruvate. The catalysed reaction is oxaloacetate + H(+) = pyruvate + CO2. In terms of biological role, catalyzes the aldol cleavage of 4-hydroxy-4-methyl-2-oxoglutarate (HMG) into 2 molecules of pyruvate. Also contains a secondary oxaloacetate (OAA) decarboxylase activity due to the common pyruvate enolate transition state formed following C-C bond cleavage in the retro-aldol and decarboxylation reactions. The polypeptide is Putative 4-hydroxy-4-methyl-2-oxoglutarate aldolase (Albidiferax ferrireducens (strain ATCC BAA-621 / DSM 15236 / T118) (Rhodoferax ferrireducens)).